The sequence spans 97 residues: MPSQMEHAMETMMFTFHKFAGDKGYLTKEDLRVLMEKEFPGFLENQKDPLAVDKIMKDLDQCRDGKVGFQSFFSLIAGLTIACNDYFVVHMKQKGKK.

N6-acetyllysine is present on residues Lys23 and Lys28. At Lys37 the chain carries N6-acetyllysine; alternate. Lys37 participates in a covalent cross-link: Glycyl lysine isopeptide (Lys-Gly) (interchain with G-Cter in SUMO2); alternate. N6-acetyllysine is present on residues Lys54 and Lys57. Residues Asp60–Ser71 are ancestral calcium site.

This sequence belongs to the S-100 family. In terms of assembly, heterotetramer containing 2 light chains of S100A10/p11 and 2 heavy chains of ANXA2/p36. Interacts with SCN10A. Interacts with TASOR.

Its function is as follows. Because S100A10 induces the dimerization of ANXA2/p36, it may function as a regulator of protein phosphorylation in that the ANXA2 monomer is the preferred target (in vitro) of tyrosine-specific kinase. This is Protein S100-A10 (S100A10) from Bos taurus (Bovine).